The chain runs to 235 residues: Serine protease SplA (235 aa).

The first 35 residues, 1–35 (MNKNVMVKGLTALTILTSLGFAENISNQPHSIAKA), serve as a signal peptide directing secretion. Catalysis depends on charge relay system residues H74, D113, and S189.

Belongs to the peptidase S1B family.

The protein localises to the secreted. The polypeptide is Serine protease SplA (splA) (Staphylococcus aureus (strain Mu3 / ATCC 700698)).